Reading from the N-terminus, the 148-residue chain is ATP synthase epsilon chain (148 aa).

The protein belongs to the ATPase epsilon chain family. F-type ATPases have 2 components, CF(1) - the catalytic core - and CF(0) - the membrane proton channel. CF(1) has five subunits: alpha(3), beta(3), gamma(1), delta(1), epsilon(1). CF(0) has three main subunits: a, b and c.

Its subcellular location is the cell membrane. Functionally, produces ATP from ADP in the presence of a proton gradient across the membrane. The chain is ATP synthase epsilon chain from Streptococcus thermophilus (strain ATCC BAA-491 / LMD-9).